A 321-amino-acid chain; its full sequence is Porphobilinogen deaminase (321 aa).

Cysteine 243 carries the S-(dipyrrolylmethanemethyl)cysteine modification.

Belongs to the HMBS family. In terms of assembly, monomer. Dipyrromethane is required as a cofactor.

It carries out the reaction 4 porphobilinogen + H2O = hydroxymethylbilane + 4 NH4(+). Its pathway is porphyrin-containing compound metabolism; protoporphyrin-IX biosynthesis; coproporphyrinogen-III from 5-aminolevulinate: step 2/4. Tetrapolymerization of the monopyrrole PBG into the hydroxymethylbilane pre-uroporphyrinogen in several discrete steps. In Histophilus somni (strain 129Pt) (Haemophilus somnus), this protein is Porphobilinogen deaminase.